Consider the following 350-residue polypeptide: UDP-N-acetylenolpyruvoylglucosamine reductase (350 aa).

Residues 24–195 (HVDATARWLL…VAVEFNLPLL (172 aa)) form the FAD-binding PCMH-type domain. The active site involves Arg172. Ser245 acts as the Proton donor in catalysis. Glu342 is an active-site residue.

This sequence belongs to the MurB family. Requires FAD as cofactor.

Its subcellular location is the cytoplasm. The enzyme catalyses UDP-N-acetyl-alpha-D-muramate + NADP(+) = UDP-N-acetyl-3-O-(1-carboxyvinyl)-alpha-D-glucosamine + NADPH + H(+). It participates in cell wall biogenesis; peptidoglycan biosynthesis. Functionally, cell wall formation. In Xanthomonas campestris pv. campestris (strain B100), this protein is UDP-N-acetylenolpyruvoylglucosamine reductase.